The following is a 176-amino-acid chain: uncharacterized protein (176 aa).

This is an uncharacterized protein from Bacillus anthracis.